Reading from the N-terminus, the 297-residue chain is MTTASATGIATLTSTGDVLDVWYPEIGSTDQSALTPLEGVDEDRNVTRKIVTTTIDTDAAPTDTYDAWLRLHLLSHRVFRPHTINLDGIFGLLNNVVWTNFGPCAVDGFALTRARLSRRGQVTVYSVDKFPRMVDYVVPSGVRIGDADRVRLGAYLADGTTVMHEGFVNFNAGTLGASMVEGRISAGVTVDDGTDVGGGASIMGTLSGGGQHVISLGKRCLLGANSGCGIPLGDDCIIEAGLYITAGTKVLFDGSLHKASTLAGSNGLIFRRDSVSGQVVAVPNTKVVELNTALHSN.

Mg(2+)-binding residues include D148 and E165. E181 functions as the Acyl-anhydride intermediate in the catalytic mechanism. Residues R183, G198, S201, A224, 239–240 (EA), G247, K258, and 271–274 (RRDS) each bind succinyl-CoA.

The protein belongs to the type 2 tetrahydrodipicolinate N-succinyltransferase family. In terms of assembly, homotrimer.

It localises to the cytoplasm. It catalyses the reaction (S)-2,3,4,5-tetrahydrodipicolinate + succinyl-CoA + H2O = (S)-2-succinylamino-6-oxoheptanedioate + CoA. It functions in the pathway amino-acid biosynthesis; L-lysine biosynthesis via DAP pathway; LL-2,6-diaminopimelate from (S)-tetrahydrodipicolinate (succinylase route): step 1/3. Its function is as follows. Catalyzes the conversion of the cyclic tetrahydrodipicolinate (THDP) into the acyclic N-succinyl-L-2-amino-6-oxopimelate using succinyl-CoA. In Corynebacterium glutamicum (strain ATCC 13032 / DSM 20300 / JCM 1318 / BCRC 11384 / CCUG 27702 / LMG 3730 / NBRC 12168 / NCIMB 10025 / NRRL B-2784 / 534), this protein is 2,3,4,5-tetrahydropyridine-2,6-dicarboxylate N-succinyltransferase.